The chain runs to 527 residues: Peptide chain release factor 3 (527 aa).

Positions 9 to 277 (AKRRTFAIIS…AVVDWAPRPL (269 aa)) constitute a tr-type G domain. GTP contacts are provided by residues 18–25 (SHPDAGKT), 86–90 (DTPGH), and 140–143 (NKLD).

It belongs to the TRAFAC class translation factor GTPase superfamily. Classic translation factor GTPase family. PrfC subfamily.

The protein localises to the cytoplasm. Its function is as follows. Increases the formation of ribosomal termination complexes and stimulates activities of RF-1 and RF-2. It binds guanine nucleotides and has strong preference for UGA stop codons. It may interact directly with the ribosome. The stimulation of RF-1 and RF-2 is significantly reduced by GTP and GDP, but not by GMP. This is Peptide chain release factor 3 from Ectopseudomonas mendocina (strain ymp) (Pseudomonas mendocina).